We begin with the raw amino-acid sequence, 303 residues long: Large ribosomal subunit protein uL1m (303 aa).

Belongs to the universal ribosomal protein uL1 family. In terms of assembly, component of the mitochondrial large ribosomal subunit (mt-LSU). Mature N.crassa 74S mitochondrial ribosomes consist of a small (37S) and a large (54S) subunit. The 37S small subunit contains a 16S ribosomal RNA (16S mt-rRNA) and 32 different proteins. The 54S large subunit contains a 23S rRNA (23S mt-rRNA) and 42 different proteins.

Its subcellular location is the mitochondrion. In terms of biological role, component of the mitochondrial ribosome (mitoribosome), a dedicated translation machinery responsible for the synthesis of mitochondrial genome-encoded proteins, including at least some of the essential transmembrane subunits of the mitochondrial respiratory chain. The mitoribosomes are attached to the mitochondrial inner membrane and translation products are cotranslationally integrated into the membrane. In Neurospora crassa (strain ATCC 24698 / 74-OR23-1A / CBS 708.71 / DSM 1257 / FGSC 987), this protein is Large ribosomal subunit protein uL1m (mrpl1).